The sequence spans 147 residues: DNA polymerase III subunit chi (147 aa).

Belongs to the DNA polymerase III chi/HolC chain family. In terms of assembly, the DNA polymerase III holoenzyme complex contains at least 10 different subunits organized into 3 functionally essential subassemblies: the Pol III core, the beta sliding clamp processivity factor and the clamp-loading complex. The Pol III core (subunits alpha, epsilon and theta) contains the polymerase and the 3'-5' exonuclease proofreading activities. The polymerase is tethered to the template via the dimeric beta sliding clamp processivity factor. The clamp-loading complex (also called gamma complex) assembles the beta sliding clamp onto the primed template and plays a central role in the organization and communication at the replication fork. The clamp-loading complex contains delta, delta', psi and chi, and 3 copies of either or both of two different DnaX proteins, gamma and tau. The DNA replisome complex has a single clamp loader (3 tau and 1 each of delta, delta', psi and chi subunits) which binds 3 Pol III cores (1 core on the leading strand and 2 on the lagging strand) each with a beta sliding clamp dimer. Additional proteins in the replisome are other copies of gamma, psi (holD) and chi (this protein), SSB, DNA helicase and RNA primase. The clamp loader hydrolyzes ATP to assemble the beta processivity factor onto the primed template and plays a central role in the organization and communication at the replication fork. The only subunit of the DNA polymerase III holoenzyme known to interact with single-stranded DNA binding protein (SSB). Interacts directly with the psi subunit (holD). Interacts directly with DNA helicase YoaA. It binds to HolD and YoaA, but not both simultaneously.

The enzyme catalyses DNA(n) + a 2'-deoxyribonucleoside 5'-triphosphate = DNA(n+1) + diphosphate. Functionally, part of the beta sliding clamp loading complex, which hydrolyzes ATP to load the beta clamp onto primed DNA to form the DNA replication pre-initiation complex. DNA polymerase III is a complex, multichain enzyme responsible for most of the replicative synthesis in bacteria. This DNA polymerase also exhibits 3' to 5' exonuclease activity. Genetically identified as involved in the repair of replication forks and tolerance of the chain-terminating nucleoside analog 3' AZT. This subunit may stabilize YoaA and/or stimulate the helicase activity of YoaA. The polypeptide is DNA polymerase III subunit chi (Escherichia coli (strain K12)).